The following is an 86-amino-acid chain: Cytochrome c-555 (86 aa).

Residues Cys14, Cys17, His18, and Met60 each contribute to the heme c site.

Post-translationally, binds 1 heme c group covalently per subunit.

In terms of biological role, this basic c-type monoheme cytochrome has been found exclusively in the green photosynthetic bacteria, although its role in bacterial photosynthesis is not established. It has an unusually low redox potential compared with mitochondrial cytochrome c. It is reactive with cytochrome c oxidases but not with reductases. The polypeptide is Cytochrome c-555 (Chlorobaculum thiosulfatiphilum (Chlorobium limicola f.sp. thiosulfatophilum)).